A 771-amino-acid polypeptide reads, in one-letter code: ATP-dependent DNA helicase UvrD1 (771 aa).

The disordered stretch occupies residues 1 to 21 (MSVHATDAKPPGPSPADQLLD). The UvrD-like helicase ATP-binding domain occupies 21–311 (DGLNPQQRQA…ILLEQNYRST (291 aa)). ATP-binding positions include 45–50 (GSGKTA) and arginine 309. The 292-residue stretch at 312–603 (QNILSAANSV…TLMTLHTAKG (292 aa)) folds into the UvrD-like helicase C-terminal domain. Residues 691–716 (FSAPVSGAGRFGSARPSPTRSGASRR) are disordered.

Belongs to the helicase family. UvrD subfamily. Monomer. Requires Mg(2+) as cofactor.

The enzyme catalyses Couples ATP hydrolysis with the unwinding of duplex DNA by translocating in the 3'-5' direction.. The catalysed reaction is ATP + H2O = ADP + phosphate + H(+). DNA-dependent ATPase, acting on dsDNA with a 3'-ssDNA tail, unwinding with 3'-to 5'-polarity. Also highly efficient on nicked DNA. Involved in the post-incision events of nucleotide excision repair. This chain is ATP-dependent DNA helicase UvrD1 (uvrD1), found in Mycobacterium bovis (strain ATCC BAA-935 / AF2122/97).